The sequence spans 282 residues: Non-selective voltage-gated ion channel VDAC2 (282 aa).

Position 1 is an N-acetylalanine (A1). The next 19 beta stranded transmembrane spans lie at L25–S34, V38–S46, V53–W63, L68–N75, T79–D88, L94–S103, S110–Q119, V122–D129, A136–G144, L149–D157, K162–T174, F177–N184, E188–V197, M201–T210, R217–L226, A230–N237, L241–L250, G253–V262, and H272–E281. NAD(+) contacts are provided by residues L241–G243 and S259–D263.

It belongs to the eukaryotic mitochondrial porin family. Monomer, homodimer and higher order oligomers; formation of higher order structures is necessary for scramblase activity. In terms of tissue distribution, expressed in skeletal muscle and oocytes.

Its subcellular location is the mitochondrion outer membrane. The protein localises to the membrane. It carries out the reaction chloride(in) = chloride(out). The catalysed reaction is K(+)(in) = K(+)(out). The enzyme catalyses a 1,2-diacyl-sn-glycero-3-phospho-L-serine(in) = a 1,2-diacyl-sn-glycero-3-phospho-L-serine(out). It catalyses the reaction a 1,2-diacyl-sn-glycero-3-phosphocholine(in) = a 1,2-diacyl-sn-glycero-3-phosphocholine(out). It carries out the reaction a 1,2-diacyl-sn-glycero-3-phospho-(1D-myo-inositol)(in) = a 1,2-diacyl-sn-glycero-3-phospho-(1D-myo-inositol)(out). Functionally, non-selective voltage-gated ion channel that mediates the transport of anions and cations through the mitochondrion outer membrane and plasma membrane. The channel adopts an open conformation at zero mV and a closed conformation at both positive and negative potentials. There are two populations of channels; the main that functions in a lower open-state conductance with lower ion selectivity, that switch, in a voltage-dependent manner, from the open to a low-conducting 'closed' state and the other that has a normal ion selectivity in the typical high conductance, 'open' state. In terms of biological role, catalyzes the scrambling of phospholipids across the outer mitochondrial membrane; the mechanism is unrelated to channel activity and is capable of translocating both anionic and zwitterionic phospholipids. This is Non-selective voltage-gated ion channel VDAC2 from Xenopus laevis (African clawed frog).